Here is a 101-residue protein sequence, read N- to C-terminus: A-type ATP synthase subunit F (101 aa).

This sequence belongs to the V-ATPase F subunit family. Has multiple subunits with at least A(3), B(3), C, D, E, F, H, I and proteolipid K(x).

It is found in the cell membrane. In terms of biological role, component of the A-type ATP synthase that produces ATP from ADP in the presence of a proton gradient across the membrane. The sequence is that of A-type ATP synthase subunit F from Archaeoglobus fulgidus (strain ATCC 49558 / DSM 4304 / JCM 9628 / NBRC 100126 / VC-16).